Consider the following 242-residue polypeptide: Probable septum site-determining protein MinC (242 aa).

The protein belongs to the MinC family. Interacts with MinD and FtsZ.

In terms of biological role, cell division inhibitor that blocks the formation of polar Z ring septums. Rapidly oscillates between the poles of the cell to destabilize FtsZ filaments that have formed before they mature into polar Z rings. Prevents FtsZ polymerization. In Agrobacterium fabrum (strain C58 / ATCC 33970) (Agrobacterium tumefaciens (strain C58)), this protein is Probable septum site-determining protein MinC.